A 496-amino-acid polypeptide reads, in one-letter code: Probable malate:quinone oxidoreductase (496 aa).

The protein belongs to the MQO family. Requires FAD as cofactor.

It carries out the reaction (S)-malate + a quinone = a quinol + oxaloacetate. It functions in the pathway carbohydrate metabolism; tricarboxylic acid cycle; oxaloacetate from (S)-malate (quinone route): step 1/1. This chain is Probable malate:quinone oxidoreductase, found in Prochlorococcus marinus (strain MIT 9313).